We begin with the raw amino-acid sequence, 607 residues long: UvrABC system protein C (607 aa).

A GIY-YIG domain is found at 16 to 94 (HLPGVYRHLD…IKSLRPRYNI (79 aa)). One can recognise a UVR domain in the interval 203-238 (REVMDEIEARMQQASGELRFEEAAVLRDQMGSLSKV).

This sequence belongs to the UvrC family. Interacts with UvrB in an incision complex.

It is found in the cytoplasm. Its function is as follows. The UvrABC repair system catalyzes the recognition and processing of DNA lesions. UvrC both incises the 5' and 3' sides of the lesion. The N-terminal half is responsible for the 3' incision and the C-terminal half is responsible for the 5' incision. This Bordetella avium (strain 197N) protein is UvrABC system protein C.